The primary structure comprises 133 residues: Ribonuclease P protein component (133 aa).

Belongs to the RnpA family. Consists of a catalytic RNA component (M1 or rnpB) and a protein subunit.

It carries out the reaction Endonucleolytic cleavage of RNA, removing 5'-extranucleotides from tRNA precursor.. Its function is as follows. RNaseP catalyzes the removal of the 5'-leader sequence from pre-tRNA to produce the mature 5'-terminus. It can also cleave other RNA substrates such as 4.5S RNA. The protein component plays an auxiliary but essential role in vivo by binding to the 5'-leader sequence and broadening the substrate specificity of the ribozyme. In Corynebacterium efficiens (strain DSM 44549 / YS-314 / AJ 12310 / JCM 11189 / NBRC 100395), this protein is Ribonuclease P protein component.